Consider the following 995-residue polypeptide: MGMRPTARMPKLTRRSRVLILIALGVIALLLAGPRLIDAYVDWLWFGELGYLSVFTTVLVTRFLVFLVAGVLVGGIVFAGLALAYRTRPVFVPNNDNDPVARYRTVVLARLRLFGIGIPAAIGLLAGIVAQSYWVRIQLFLHGGDFGITDPQFGKDLGFYAFELPFYRLLLSYLFVAIFLAFVANVVSHYLFGGIRLTGRSGALSRSARIQLVSLVGVLVLLKTVAYWLNRYELLSHTRGGKPFTGAGYTDINAVLPAKLILMAIAVICAAAVFSAIVLRDLRIPAIGLVLLLLSSLIVGAAWPMIVEQISVKPNAAQKESEYISRSITATRQAYGLTSNVVTYRNYTGDGEATAQQVAADRATTSNIRLLDPTIVSPAFTQFQQGKNFYYFPDQLSIDRYFDRNNNLRDYVVAARELNPDRLIDNQRDWINRHTVYTHGNGFIASPANTVRGIANDPNQNGGYPEFLVNVVGANGTVVSDGPAPLDQPRIYYGPVISNTPADYAIVGKTGADREYDYETSADTKNYTYTGSGGVSVGSWISRTVFAAKFAERNFLFSNVIGSNSKILFNRDPAQRVEAVAPWLTTDSAVYPAIVNKRMVWILDGYTTLDNYPYSQLTSLSSATADSNEVAFNRLLPDKQVSYIRNSVKATVDAYDGTVTLYQQDEQDPVLKAWMQVFPGTVKPKGDISPELAAHLRYPEDLFKVQRMLLAKYHVNDPVTFFSTSDFWDVPLDPNPTASSYQPPYYIVAKNIAKNDNSASYQLISAMNRFKRDYLAAYISASSDPATYGKITVLTIPGQVNGPKLANNAITTDPAVSQDLGVIGRDNQNRIRWGNLLTLPVGQGGLLYVEPVYASPGASDAASSYPRLIRVAMMYNDKIGYGPTVRDALNGLFGPGAGDAATGIQPTEGGAPANVPPNNAPSPEALPGTPPSPPTAVPPAPEASVTLSPARAAAMKEIQSAIGAARDAQKKGDFAAYGAALQRLDDAITKFNNTQ.

The next 7 helical transmembrane spans lie at 18–38 (VLIL…RLID), 63–83 (FLVF…GLAL), 113–133 (LFGI…AQSY), 175–195 (FVAI…FGGI), 210–230 (IQLV…YWLN), 259–279 (KLIL…AIVL), and 287–307 (IGLV…PMIV). A disordered region spans residues 900–947 (AATGIQPTEGGAPANVPPNNAPSPEALPGTPPSPPTAVPPAPEASVTL). A compositionally biased stretch (pro residues) spans 928–941 (GTPPSPPTAVPPAP).

The protein belongs to the UPF0182 family.

The protein resides in the cell membrane. This is UPF0182 protein MUL_2505 from Mycobacterium ulcerans (strain Agy99).